Here is a 316-residue protein sequence, read N- to C-terminus: ATP synthase gamma chain (316 aa).

Belongs to the ATPase gamma chain family. As to quaternary structure, F-type ATPases have 2 components, CF(1) - the catalytic core - and CF(0) - the membrane proton channel. CF(1) has five subunits: alpha(3), beta(3), gamma(1), delta(1), epsilon(1). CF(0) has three main subunits: a, b and c.

It localises to the cellular thylakoid membrane. Produces ATP from ADP in the presence of a proton gradient across the membrane. The gamma chain is believed to be important in regulating ATPase activity and the flow of protons through the CF(0) complex. In Synechococcus sp. (strain CC9605), this protein is ATP synthase gamma chain.